Consider the following 524-residue polypeptide: 5'-AMP-activated protein kinase subunit gamma-2 (524 aa).

A disordered region spans residues 1 to 178 (MPLLDGDLEG…TRPPLASPTH (178 aa)). Phosphoserine occurs at positions 21, 27, 29, 46, 94, 99, 117, and 118. The span at 112-123 (TSGLSSSPSTPT) shows a compositional bias: low complexity. Position 121 is a phosphothreonine (threonine 121). Basic and acidic residues predominate over residues 135–145 (SYKHEPERLEN). Positions 148 to 168 (YASSSPPDTGQRFCPSSFQSP) are enriched in polar residues. The residue at position 152 (serine 152) is a Phosphoserine. CBS domains are found at residues 230-290 (PTSS…KSPM), 312-370 (TFKP…MSDM), and 385-447 (IGTY…NLDI). ADP-binding positions include arginine 257, 272–277 (MLTITD), valine 317, 338–339 (HR), and lysine 357. Residues arginine 257, 272 to 277 (MLTITD), valine 317, histidine 338, 338 to 339 (HR), lysine 357, threonine 387, alanine 392, 413 to 414 (SA), 429 to 432 (SKFD), arginine 456, histidine 485, 485 to 486 (HR), and 501 to 504 (SLSD) each bind AMP. Residues arginine 257, 272–277 (MLTITD), valine 317, 338–339 (HR), arginine 339, and lysine 357 contribute to the ATP site. Positions 325–346 (LLDAVYSLIKNKIHRLPVIDPI) match the AMPK pseudosubstrate motif. Residues 429-432 (SKFD), arginine 456, and 485-486 (HR) each bind ADP. ATP-binding positions include 429 to 432 (SKFD), arginine 456, and 485 to 486 (HR). The region spanning 459–517 (YFEGVVKCNKLEILETIVDRIVRAEVHRLVVANEADSIVGIISLSDILQALILTPAGAK) is the CBS 4 domain.

This sequence belongs to the 5'-AMP-activated protein kinase gamma subunit family. In terms of assembly, AMPK is a heterotrimer of an alpha catalytic subunit (PRKAA1 or PRKAA2), a beta (PRKAB1 or PRKAB2) and a gamma non-catalytic subunits (PRKAG1, PRKAG2 or PRKAG3). Interacts with FNIP1 and FNIP2. Post-translationally, phosphorylated by ULK1; leading to negatively regulate AMPK activity and suggesting the existence of a regulatory feedback loop between ULK1 and AMPK. In terms of processing, glycosylated; O-GlcNAcylated by OGT, promoting the AMP-activated protein kinase (AMPK) activity.

Its function is as follows. AMP/ATP-binding subunit of AMP-activated protein kinase (AMPK), an energy sensor protein kinase that plays a key role in regulating cellular energy metabolism. In response to reduction of intracellular ATP levels, AMPK activates energy-producing pathways and inhibits energy-consuming processes: inhibits protein, carbohydrate and lipid biosynthesis, as well as cell growth and proliferation. AMPK acts via direct phosphorylation of metabolic enzymes, and by longer-term effects via phosphorylation of transcription regulators. Also acts as a regulator of cellular polarity by remodeling the actin cytoskeleton; probably by indirectly activating myosin. Gamma non-catalytic subunit mediates binding to AMP, ADP and ATP, leading to activate or inhibit AMPK: AMP-binding results in allosteric activation of alpha catalytic subunit (PRKAA1 or PRKAA2) both by inducing phosphorylation and preventing dephosphorylation of catalytic subunits. ADP also stimulates phosphorylation, without stimulating already phosphorylated catalytic subunit. ATP promotes dephosphorylation of catalytic subunit, rendering the AMPK enzyme inactive. This Pongo abelii (Sumatran orangutan) protein is 5'-AMP-activated protein kinase subunit gamma-2 (PRKAG2).